A 763-amino-acid chain; its full sequence is Cadherin-like protein 26 (763 aa).

An N-terminal signal peptide occupies residues 1–20 (MDTRGCAWLLLLLSLPQGQS). Cadherin domains lie at 21–140 (HQPL…APQF), 141–250 (PEKE…MPTF), 251–371 (MEDR…PPAF), and 370–478 (AFHP…APTL). Over 21-590 (HQPLHRSKRR…SECEEPSDTW (570 aa)) the chain is Extracellular. Asparagine 56, asparagine 60, and asparagine 146 each carry an N-linked (GlcNAc...) asparagine glycan. Asparagine 394 and asparagine 440 each carry an N-linked (GlcNAc...) asparagine glycan. The helical transmembrane segment at 591 to 611 (LLWWALSPVGAALMVLSAALL) threads the bilayer. Over 612-763 (CLLRCSCTFG…AMCFTSRVPS (152 aa)) the chain is Cytoplasmic.

Homodimer. Component of a cadherin:catenin adhesion complex composed of at least of CDH26, beta-catenin/CTNNB1, alpha-catenin/CTNNA1 and p120 catenin/CTNND1. In terms of processing, N-glycosylated.

It localises to the cell membrane. Its function is as follows. Cadherins are calcium-dependent cell adhesion proteins. They preferentially interact with themselves in a homophilic manner in connecting cells; cadherins may thus contribute to the sorting of heterogeneous cell types. Ligand for integrins alpha-E/beta-7, ITGAE:ITGAB7, alpha-4/beta-7, ITGA4:ITGAB7 and alpha-4/beta-1, ITGA4:ITGAB1 through which modulates CD4(+) T cells activation. In Mus musculus (Mouse), this protein is Cadherin-like protein 26 (Cdh26).